We begin with the raw amino-acid sequence, 287 residues long: Probable endoribonuclease YicC (287 aa).

It belongs to the YicC/YloC family. A divalent metal cation serves as cofactor.

Probably a ssRNA endonuclease. Its function is as follows. Might contribute to small RNA (sRNA) regulation. In Salmonella typhimurium (strain LT2 / SGSC1412 / ATCC 700720), this protein is Probable endoribonuclease YicC.